Reading from the N-terminus, the 420-residue chain is Innexin-3 (420 aa).

Transmembrane regions (helical) follow at residues 33–53 (ATLL…GSAI), 104–124 (WVPI…WIWS), 193–213 (MLYI…FIIL), and 278–298 (IYLF…INTL). Residues 378 to 405 (NRDFHHGHSTKSTSPGLEEGHHEHLYTP) form a disordered region. The segment covering 395-405 (EEGHHEHLYTP) has biased composition (basic and acidic residues).

The protein belongs to the pannexin family. Interacts with F-actin. As to expression, evenly distributed along the adjoining membranes of the two pm5 pharyngeal muscle cells.

It localises to the cell membrane. Its subcellular location is the cell junction. The protein resides in the gap junction. Its function is as follows. Structural component of gap junctions. Plays a role in maintaining gap junction activity to promote phayngeal muscle contraction. This chain is Innexin-3, found in Caenorhabditis elegans.